Reading from the N-terminus, the 120-residue chain is MFLLHEYDIFWTFLIIASLIPILVFWISGLLAPVSEGPEKLSSYESGIEPMGGAWLQFRIRYYMFALVFVVFDVETVFLYPWAMSFDVLGVSVFIEAFIFVLILVVGLVYAWRKGALEWS.

3 helical membrane passes run 9 to 29 (IFWT…WISG), 64 to 84 (MFAL…PWAM), and 88 to 108 (VLGV…VVGL).

It belongs to the complex I subunit 3 family. As to quaternary structure, NDH is composed of at least 16 different subunits, 5 of which are encoded in the nucleus.

The protein resides in the plastid. It localises to the chloroplast thylakoid membrane. It carries out the reaction a plastoquinone + NADH + (n+1) H(+)(in) = a plastoquinol + NAD(+) + n H(+)(out). The catalysed reaction is a plastoquinone + NADPH + (n+1) H(+)(in) = a plastoquinol + NADP(+) + n H(+)(out). Functionally, NDH shuttles electrons from NAD(P)H:plastoquinone, via FMN and iron-sulfur (Fe-S) centers, to quinones in the photosynthetic chain and possibly in a chloroplast respiratory chain. The immediate electron acceptor for the enzyme in this species is believed to be plastoquinone. Couples the redox reaction to proton translocation, and thus conserves the redox energy in a proton gradient. This is NAD(P)H-quinone oxidoreductase subunit 3, chloroplastic from Zea mays (Maize).